Here is a 260-residue protein sequence, read N- to C-terminus: NifU-like protein C1709.19c (260 aa).

A nifU region spans residues 161-231 (IKELIETSIR…IPEVENVVQV (71 aa)).

It belongs to the NifU family.

The protein is NifU-like protein C1709.19c of Schizosaccharomyces pombe (strain 972 / ATCC 24843) (Fission yeast).